Here is a 133-residue protein sequence, read N- to C-terminus: Profilin Sal k 4.0101 (133 aa).

C95 and C117 are disulfide-bonded.

This sequence belongs to the profilin family. In terms of assembly, occurs in many kinds of cells as a complex with monomeric actin in a 1:1 ratio. As to expression, expressed in pollen.

The protein resides in the cytoplasm. It localises to the cytoskeleton. Its function is as follows. Binds to actin and affects the structure of the cytoskeleton. At high concentrations, profilin prevents the polymerization of actin, whereas it enhances it at low concentrations. In Kali turgidum (Prickly saltwort), this protein is Profilin Sal k 4.0101.